We begin with the raw amino-acid sequence, 198 residues long: Nicotinamidase 3 (198 aa).

This sequence belongs to the isochorismatase family.

The catalysed reaction is nicotinamide + H2O = nicotinate + NH4(+). Its pathway is cofactor biosynthesis; nicotinate biosynthesis; nicotinate from nicotinamide: step 1/1. In terms of biological role, catalyzes the deamidation of nicotinamide, an early step in the NAD(+) salvage pathway. Prevents the accumulation of intracellular nicotinamide, a known inhibitor of poly(ADP-ribose) polymerases (PARP enzymes). The chain is Nicotinamidase 3 from Arabidopsis thaliana (Mouse-ear cress).